The sequence spans 214 residues: Protein PsaE (214 aa).

The first 24 residues, 1–24 (MSHCVVLNKLESVLIIGDSRYALS), serve as a signal peptide directing secretion. Residues 1–94 (MSHCVVLNKL…YKNEGYSYQK (94 aa)) constitute a DNA-binding region (ompR/PhoB-type).

Its function is as follows. Required for expression of pH 6 antigen. The polypeptide is Protein PsaE (psaE) (Yersinia pseudotuberculosis serotype I (strain IP32953)).